The following is a 206-amino-acid chain: Superoxide dismutase [Mn] (206 aa).

Residues H30, H78, D166, and H170 each coordinate Mn(2+).

It belongs to the iron/manganese superoxide dismutase family. Homodimer. Mn(2+) is required as a cofactor.

It catalyses the reaction 2 superoxide + 2 H(+) = H2O2 + O2. Its function is as follows. Destroys superoxide anion radicals which are normally produced within the cells and which are toxic to biological systems. This is Superoxide dismutase [Mn] (sodA) from Chlamydia trachomatis serovar D (strain ATCC VR-885 / DSM 19411 / UW-3/Cx).